The following is a 438-amino-acid chain: UDP-N-acetylmuramoylalanine--D-glutamate ligase (438 aa).

112–118 contacts ATP; it reads GSNGKST.

This sequence belongs to the MurCDEF family.

The protein resides in the cytoplasm. It catalyses the reaction UDP-N-acetyl-alpha-D-muramoyl-L-alanine + D-glutamate + ATP = UDP-N-acetyl-alpha-D-muramoyl-L-alanyl-D-glutamate + ADP + phosphate + H(+). It functions in the pathway cell wall biogenesis; peptidoglycan biosynthesis. In terms of biological role, cell wall formation. Catalyzes the addition of glutamate to the nucleotide precursor UDP-N-acetylmuramoyl-L-alanine (UMA). This is UDP-N-acetylmuramoylalanine--D-glutamate ligase from Shigella sonnei (strain Ss046).